The sequence spans 711 residues: Forkhead box protein P1 (711 aa).

Residues 1 to 19 (MMQESGSEAKSNGSTIQNG) show a composition bias toward polar residues. Residues 1 to 41 (MMQESGSEAKSNGSTIQNGSSGGNHLLECGTLRDTRSNGEA) are disordered. A Phosphoserine modification is found at S115. Disordered stretches follow at residues 273–292 (HTAE…TSTC) and 305–332 (MNPH…EHPH). Residues 305–317 (MNPHASTNGQLSV) are compositionally biased toward polar residues. The segment covering 320 to 332 (PKRESLSHEEHPH) has biased composition (basic and acidic residues). Residue K321 forms a Glycyl lysine isopeptide (Lys-Gly) (interchain with G-Cter in SUMO2) linkage. The C2H2-type zinc-finger motif lies at 340–365 (GVCKWPGCEAVCDDFPAFLKHLNSEH). Residues 382–403 (VQQLELQLAKDKERLQAMMTHL) form a leucine-zipper region. Residues K406 and K411 each participate in a glycyl lysine isopeptide (Lys-Gly) (interchain with G-Cter in SUMO2) cross-link. A CTBP1-binding region spans residues 416 to 420 (PLNLV). Over residues 424 to 437 (TLSKSASEASPQSL) the composition is skewed to polar residues. Positions 424–456 (TLSKSASEASPQSLPHTPTTPTAPLTPVTQGPS) are disordered. Residues 438–452 (PHTPTTPTAPLTPVT) are compositionally biased toward low complexity. K476 is covalently cross-linked (Glycyl lysine isopeptide (Lys-Gly) (interchain with G-Cter in SUMO2)). A DNA-binding region (fork-head) is located at residues 499-589 (RPPFTYASLI…PQKISGNPSL (91 aa)). The interval 645–711 (EHTNSNESDS…EDEPVNEDME (67 aa)) is disordered. Residues 646–657 (HTNSNESDSSPG) are compositionally biased toward polar residues. T687 is subject to Phosphothreonine. Position 692 is a phosphoserine (S692). A compositionally biased stretch (acidic residues) spans 701 to 711 (YEDEPVNEDME).

As to quaternary structure, forms homodimers and heterodimers with FOXP2 and FOXP4. Dimerization is required for DNA-binding. Self-associates. Interacts with CTBP1. Interacts with NCOR2 and AR. Interacts with FOXP2. Interacts with TBR1. Interacts with AURKA; this interaction facilitates the phosphorylation of FOXP1, which suppresses the expression of FBXL7. Interacts with ZMYM2.

The protein localises to the nucleus. Functionally, transcriptional repressor. Can act with CTBP1 to synergistically repress transcription but CTPBP1 is not essential. Plays an important role in the specification and differentiation of lung epithelium. Acts cooperatively with FOXP4 to regulate lung secretory epithelial cell fate and regeneration by restricting the goblet cell lineage program; the function may involve regulation of AGR2. Essential transcriptional regulator of B-cell development. Involved in regulation of cardiac muscle cell proliferation. Involved in the columnar organization of spinal motor neurons. Promotes the formation of the lateral motor neuron column (LMC) and the preganglionic motor column (PGC) and is required for respective appropriate motor axon projections. The segment-appropriate generation of spinal cord motor columns requires cooperation with other Hox proteins. Can regulate PITX3 promoter activity; may promote midbrain identity in embryonic stem cell-derived dopamine neurons by regulating PITX3. Negatively regulates the differentiation of T follicular helper cells T(FH)s. Involved in maintenance of hair follicle stem cell quiescence; the function probably involves regulation of FGF18. Represses transcription of various pro-apoptotic genes and cooperates with NF-kappa B-signaling in promoting B-cell expansion by inhibition of caspase-dependent apoptosis. Binds to CSF1R promoter elements and is involved in regulation of monocyte differentiation and macrophage functions; repression of CSF1R in monocytes seems to involve NCOR2 as corepressor. Involved in endothelial cell proliferation, tube formation and migration indicative for a role in angiogenesis; the role in neovascularization seems to implicate suppression of SEMA5B. Can negatively regulate androgen receptor signaling. Acts as a transcriptional activator of the FBXL7 promoter; this activity is regulated by AURKA. The sequence is that of Forkhead box protein P1 (Foxp1) from Rattus norvegicus (Rat).